Consider the following 118-residue polypeptide: Small ribosomal subunit protein uS13 (118 aa).

The segment at 94-118 (GLPVRGQRTKTNARTRKGPRKPIKK) is disordered.

Belongs to the universal ribosomal protein uS13 family. As to quaternary structure, part of the 30S ribosomal subunit. Forms a loose heterodimer with protein S19. Forms two bridges to the 50S subunit in the 70S ribosome.

Located at the top of the head of the 30S subunit, it contacts several helices of the 16S rRNA. In the 70S ribosome it contacts the 23S rRNA (bridge B1a) and protein L5 of the 50S subunit (bridge B1b), connecting the 2 subunits; these bridges are implicated in subunit movement. Contacts the tRNAs in the A and P-sites. The chain is Small ribosomal subunit protein uS13 from Erwinia tasmaniensis (strain DSM 17950 / CFBP 7177 / CIP 109463 / NCPPB 4357 / Et1/99).